We begin with the raw amino-acid sequence, 565 residues long: NAD-dependent malic enzyme (565 aa).

Tyr-104 functions as the Proton donor in the catalytic mechanism. NAD(+) is bound at residue Arg-157. The Proton acceptor role is filled by Lys-175. The a divalent metal cation site is built by Glu-246, Asp-247, and Asp-270. Positions 270 and 418 each coordinate NAD(+).

It belongs to the malic enzymes family. Homotetramer. Mg(2+) serves as cofactor. Mn(2+) is required as a cofactor.

The enzyme catalyses (S)-malate + NAD(+) = pyruvate + CO2 + NADH. It catalyses the reaction oxaloacetate + H(+) = pyruvate + CO2. This Escherichia coli O157:H7 protein is NAD-dependent malic enzyme.